The primary structure comprises 494 residues: Ribonuclease H (494 aa).

Disordered regions lie at residues 79–148 and 205–231; these read NRRR…APPP and RSGL…VGLR. Polar residues-rich tracts occupy residues 84–100 and 131–143; these read GSTS…NQLA and PTTS…TRTS. Residues 272–488 enclose the RNase H type-1 domain; it reads SSVPQVVYVD…ADVLAVAGAR (217 aa). Positions 281, 325, 374, and 480 each coordinate Mg(2+).

It belongs to the RNase H family. In terms of assembly, monomer. Mg(2+) serves as cofactor.

It carries out the reaction Endonucleolytic cleavage to 5'-phosphomonoester.. Functionally, endonuclease that specifically degrades the RNA of RNA-DNA hybrids. This Crithidia fasciculata protein is Ribonuclease H (RNH1).